The primary structure comprises 316 residues: Coiled-coil domain-containing protein 42 (316 aa).

Coiled coils occupy residues 43–151 (RLLE…EYSI) and 182–236 (HHDL…SDVI).

It belongs to the CFAP73 family. Interacts with ODF1 and ODF2. Interacts with CCDC38. Interacts with CCDC146. Interacts with CFAP53.

Its subcellular location is the cytoplasm. The protein resides in the perinuclear region. It is found in the cytoskeleton. The protein localises to the cell projection. It localises to the cilium. Its subcellular location is the flagellum. The protein resides in the microtubule organizing center. It is found in the centrosome. Functionally, essential for male fertility. Required for sperm development. The sequence is that of Coiled-coil domain-containing protein 42 from Bos taurus (Bovine).